A 92-amino-acid polypeptide reads, in one-letter code: Large ribosomal subunit protein bL28 (92 aa).

The protein belongs to the bacterial ribosomal protein bL28 family.

The protein is Large ribosomal subunit protein bL28 of Borrelia duttonii (strain Ly).